The sequence spans 239 residues: Geranylgeranylglyceryl phosphate synthase (239 aa).

Mg(2+)-binding residues include D19 and S48. Sn-glycerol 1-phosphate is bound by residues 167–173, 197–198, and 219–220; these read YLEAGSG, GG, and GT.

The protein belongs to the GGGP/HepGP synthase family. Group II subfamily. Mg(2+) serves as cofactor.

It is found in the cytoplasm. The catalysed reaction is sn-glycerol 1-phosphate + (2E,6E,10E)-geranylgeranyl diphosphate = sn-3-O-(geranylgeranyl)glycerol 1-phosphate + diphosphate. It participates in membrane lipid metabolism; glycerophospholipid metabolism. In terms of biological role, prenyltransferase that catalyzes the transfer of the geranylgeranyl moiety of geranylgeranyl diphosphate (GGPP) to the C3 hydroxyl of sn-glycerol-1-phosphate (G1P). This reaction is the first ether-bond-formation step in the biosynthesis of archaeal membrane lipids. The chain is Geranylgeranylglyceryl phosphate synthase from Methanopyrus kandleri (strain AV19 / DSM 6324 / JCM 9639 / NBRC 100938).